The primary structure comprises 348 residues: NADH-ubiquinone oxidoreductase chain 2 (348 aa).

11 helical membrane passes run 1-21 (MMTLILILGIFLGTMTTMFSS), 23-43 (WFFAWLGLEINMMAIIPMMLF), 56-76 (YFISQAVASSTIILASSWNYF), 92-112 (ITLIILALLLKLGLAPLHFWL), 123-143 (MGLIISTWQKLAPLTLLIQVS), 148-168 (NMYILISISVMSVLAGGFGGL), 176-196 (LLAYSSISHMGWIVGVMAVSA), 198-218 (LSWVTTVIYLIINFSIFTILI), 242-262 (CILVLLSLGGLPPFTGFFLKL), 272-292 (SLILMTILLMAGSLISLFFYL), and 321-341 (LLFNLMFLFSILLLPLSPFMI).

It belongs to the complex I subunit 2 family.

The protein resides in the mitochondrion inner membrane. It catalyses the reaction a ubiquinone + NADH + 5 H(+)(in) = a ubiquinol + NAD(+) + 4 H(+)(out). Core subunit of the mitochondrial membrane respiratory chain NADH dehydrogenase (Complex I) that is believed to belong to the minimal assembly required for catalysis. Complex I functions in the transfer of electrons from NADH to the respiratory chain. The immediate electron acceptor for the enzyme is believed to be ubiquinone. This chain is NADH-ubiquinone oxidoreductase chain 2 (MT-ND2), found in Myxine glutinosa (Atlantic hagfish).